The chain runs to 38 residues: Tyrosinase inhibitor (38 aa).

3 disulfides stabilise this stretch: cysteine 11–cysteine 25, cysteine 18–cysteine 29, and cysteine 24–cysteine 36. Tyrosine 32 is modified (3',4'-dihydroxyphenylalanine).

As to quaternary structure, monomer. Post-translationally, contains L-DOPA (3',4'-dihydroxyphenylalanine).

The protein resides in the secreted. Its function is as follows. Potent reversible, competitive inhibitor of tyrosinase (phenol oxidase) in the nanomolar range. The sequence is that of Tyrosinase inhibitor from Musca domestica (House fly).